The following is a 721-amino-acid chain: Fatty acid oxidation complex subunit alpha (721 aa).

The interval 1–190 is enoyl-CoA hydratase/isomerase; that stretch reads MIYEGKAITV…KVGVVDAIVA (190 aa). Residue D297 coordinates substrate. The interval 312–721 is 3-hydroxyacyl-CoA dehydrogenase; sequence RDVKQAAVLG…SFFGQASSEV (410 aa). NAD(+) contacts are provided by residues M325, D344, 401 to 403, K408, and S430; that span reads VVE. The active-site For 3-hydroxyacyl-CoA dehydrogenase activity is H451. Residue N454 participates in NAD(+) binding. Substrate-binding residues include N501 and Y660.

The protein in the N-terminal section; belongs to the enoyl-CoA hydratase/isomerase family. It in the C-terminal section; belongs to the 3-hydroxyacyl-CoA dehydrogenase family. In terms of assembly, heterotetramer of two alpha chains (FadB) and two beta chains (FadA).

It catalyses the reaction a (3S)-3-hydroxyacyl-CoA + NAD(+) = a 3-oxoacyl-CoA + NADH + H(+). The catalysed reaction is a (3S)-3-hydroxyacyl-CoA = a (2E)-enoyl-CoA + H2O. It carries out the reaction a 4-saturated-(3S)-3-hydroxyacyl-CoA = a (3E)-enoyl-CoA + H2O. The enzyme catalyses (3S)-3-hydroxybutanoyl-CoA = (3R)-3-hydroxybutanoyl-CoA. It catalyses the reaction a (3Z)-enoyl-CoA = a 4-saturated (2E)-enoyl-CoA. The catalysed reaction is a (3E)-enoyl-CoA = a 4-saturated (2E)-enoyl-CoA. The protein operates within lipid metabolism; fatty acid beta-oxidation. Functionally, involved in the aerobic and anaerobic degradation of long-chain fatty acids via beta-oxidation cycle. Catalyzes the formation of 3-oxoacyl-CoA from enoyl-CoA via L-3-hydroxyacyl-CoA. It can also use D-3-hydroxyacyl-CoA and cis-3-enoyl-CoA as substrate. This Pseudomonas syringae pv. tomato (strain ATCC BAA-871 / DC3000) protein is Fatty acid oxidation complex subunit alpha.